The following is a 402-amino-acid chain: 4-hydroxy-3-methylbut-2-enyl diphosphate reductase (402 aa).

[4Fe-4S] cluster is bound at residue C66. H96 contacts (2E)-4-hydroxy-3-methylbut-2-enyl diphosphate. H96 is a dimethylallyl diphosphate binding site. Isopentenyl diphosphate is bound at residue H96. C157 is a binding site for [4Fe-4S] cluster. Residue H185 coordinates (2E)-4-hydroxy-3-methylbut-2-enyl diphosphate. H185 contacts dimethylallyl diphosphate. H185 is an isopentenyl diphosphate binding site. E187 (proton donor) is an active-site residue. T250 is a binding site for (2E)-4-hydroxy-3-methylbut-2-enyl diphosphate. Residue C288 coordinates [4Fe-4S] cluster. (2E)-4-hydroxy-3-methylbut-2-enyl diphosphate-binding residues include S317, S318, N319, and S379. Residues S317, S318, N319, and S379 each coordinate dimethylallyl diphosphate. Residues S317, S318, N319, and S379 each coordinate isopentenyl diphosphate.

The protein belongs to the IspH family. Requires [4Fe-4S] cluster as cofactor.

The catalysed reaction is isopentenyl diphosphate + 2 oxidized [2Fe-2S]-[ferredoxin] + H2O = (2E)-4-hydroxy-3-methylbut-2-enyl diphosphate + 2 reduced [2Fe-2S]-[ferredoxin] + 2 H(+). It catalyses the reaction dimethylallyl diphosphate + 2 oxidized [2Fe-2S]-[ferredoxin] + H2O = (2E)-4-hydroxy-3-methylbut-2-enyl diphosphate + 2 reduced [2Fe-2S]-[ferredoxin] + 2 H(+). It participates in isoprenoid biosynthesis; dimethylallyl diphosphate biosynthesis; dimethylallyl diphosphate from (2E)-4-hydroxy-3-methylbutenyl diphosphate: step 1/1. Its pathway is isoprenoid biosynthesis; isopentenyl diphosphate biosynthesis via DXP pathway; isopentenyl diphosphate from 1-deoxy-D-xylulose 5-phosphate: step 6/6. Its function is as follows. Catalyzes the conversion of 1-hydroxy-2-methyl-2-(E)-butenyl 4-diphosphate (HMBPP) into a mixture of isopentenyl diphosphate (IPP) and dimethylallyl diphosphate (DMAPP). Acts in the terminal step of the DOXP/MEP pathway for isoprenoid precursor biosynthesis. The chain is 4-hydroxy-3-methylbut-2-enyl diphosphate reductase from Thermosynechococcus vestitus (strain NIES-2133 / IAM M-273 / BP-1).